The primary structure comprises 681 residues: Transmembrane protein 168-A (681 aa).

The next 9 membrane-spanning stretches (helical) occupy residues 16–36 (FLRC…CLGM), 47–67 (MILV…ILYY), 73–93 (SASL…LCFL), 135–155 (PVVI…ASIS), 156–176 (LVFD…ALII), 184–204 (LALP…FQSL), 252–272 (FSLF…AFKL), 281–301 (VIPG…VFLV), and 346–365 (LVLF…WQVA). Asn517 is a glycosylation site (N-linked (GlcNAc...) asparagine).

The protein belongs to the TMEM168 family.

It is found in the nucleus membrane. In terms of biological role, plays a key role in maintaining the cardiac electrical stability by modulating cell surface expression of SCN5A. The polypeptide is Transmembrane protein 168-A (tmem168a) (Danio rerio (Zebrafish)).